Reading from the N-terminus, the 530-residue chain is Phosphoenolpyruvate carboxykinase (ATP) (530 aa).

Substrate contacts are provided by Arg58, Tyr195, and Lys201. ATP-binding positions include Lys201, His220, and 236–244 (GLSGTGKTT). 2 residues coordinate Mn(2+): Lys201 and His220. Asp257 lines the Mn(2+) pocket. ATP is bound by residues Glu285, Arg321, 440–441 (RI), and Thr446. A substrate-binding site is contributed by Arg321.

Belongs to the phosphoenolpyruvate carboxykinase (ATP) family. Requires Mn(2+) as cofactor.

It is found in the cytoplasm. The catalysed reaction is oxaloacetate + ATP = phosphoenolpyruvate + ADP + CO2. The protein operates within carbohydrate biosynthesis; gluconeogenesis. Functionally, involved in the gluconeogenesis. Catalyzes the conversion of oxaloacetate (OAA) to phosphoenolpyruvate (PEP) through direct phosphoryl transfer between the nucleoside triphosphate and OAA. This chain is Phosphoenolpyruvate carboxykinase (ATP), found in Staphylococcus aureus (strain MSSA476).